A 247-amino-acid polypeptide reads, in one-letter code: Protein Thf1 (247 aa).

Residues 198 to 224 (IAQVRQAMDDILEAQKKRREADQAKKE) are a coiled coil. A disordered region spans residues 209–247 (LEAQKKRREADQAKKEGSDDTPTTEASTPDSEPTSEVSS). The segment covering 210–226 (EAQKKRREADQAKKEGS) has biased composition (basic and acidic residues). Residues 228 to 247 (DTPTTEASTPDSEPTSEVSS) are compositionally biased toward polar residues.

Belongs to the THF1 family.

Its function is as follows. May be involved in photosynthetic membrane biogenesis. This is Protein Thf1 from Acaryochloris marina (strain MBIC 11017).